The sequence spans 110 residues: Coiled-coil-helix-coiled-coil-helix domain-containing protein 5 (110 aa).

N-acetylmethionine is present on methionine 1. CHCH domains lie at 9 to 52 and 55 to 97; these read ARYC…PIIR and RQAC…QPPR. 4 consecutive short sequence motifs (cx9C motif) follow at residues 12–22, 34–44, 58–68, and 79–89; these read CGRELEQYGQC, CHYLKMSIAQC, CAQPFEAFEEC, and CAEHMRRFLQC. Cystine bridges form between cysteine 12–cysteine 44, cysteine 22–cysteine 34, cysteine 58–cysteine 89, and cysteine 68–cysteine 79.

Monomer.

The protein localises to the mitochondrion intermembrane space. The polypeptide is Coiled-coil-helix-coiled-coil-helix domain-containing protein 5 (CHCHD5) (Homo sapiens (Human)).